Consider the following 149-residue polypeptide: Large ribosomal subunit protein bL9 (149 aa).

It belongs to the bacterial ribosomal protein bL9 family.

In terms of biological role, binds to the 23S rRNA. This chain is Large ribosomal subunit protein bL9, found in Teredinibacter turnerae (strain ATCC 39867 / T7901).